The sequence spans 189 residues: Pyridoxal 5'-phosphate synthase subunit PdxT (189 aa).

52 to 54 serves as a coordination point for L-glutamine; the sequence is GES. The active-site Nucleophile is the C81. L-glutamine contacts are provided by residues R108 and 136 to 137; that span reads IR. Residues H172 and E174 each act as charge relay system in the active site.

Belongs to the glutaminase PdxT/SNO family. In terms of assembly, in the presence of PdxS, forms a dodecamer of heterodimers. Only shows activity in the heterodimer.

It catalyses the reaction aldehydo-D-ribose 5-phosphate + D-glyceraldehyde 3-phosphate + L-glutamine = pyridoxal 5'-phosphate + L-glutamate + phosphate + 3 H2O + H(+). It carries out the reaction L-glutamine + H2O = L-glutamate + NH4(+). It functions in the pathway cofactor biosynthesis; pyridoxal 5'-phosphate biosynthesis. Functionally, catalyzes the hydrolysis of glutamine to glutamate and ammonia as part of the biosynthesis of pyridoxal 5'-phosphate. The resulting ammonia molecule is channeled to the active site of PdxS. The protein is Pyridoxal 5'-phosphate synthase subunit PdxT of Haemophilus ducreyi (strain 35000HP / ATCC 700724).